A 339-amino-acid polypeptide reads, in one-letter code: UDP-glucose 4-epimerase (339 aa).

Residues 12–13 (FI), 32–37 (DNLCNS), 59–60 (DI), 81–85 (FAGLK), Asn-100, Ser-125, Tyr-150, Lys-154, and Phe-179 contribute to the NAD(+) site. Substrate contacts are provided by Ser-125 and Tyr-150. Tyr-150 (proton acceptor) is an active-site residue. Residues Asn-180, 200-201 (NL), 217-219 (AVF), Arg-232, and 293-296 (RAGD) each bind substrate.

It belongs to the NAD(P)-dependent epimerase/dehydratase family. Homodimer. It depends on NAD(+) as a cofactor.

The enzyme catalyses UDP-alpha-D-glucose = UDP-alpha-D-galactose. The protein operates within carbohydrate metabolism; galactose metabolism. Involved in the metabolism of galactose. Plays an essential role in the incorporation of galactose into meningococcal lipopolysaccharide surface molecules, which are important for pathogenesis. Catalyzes the conversion of UDP-galactose (UDP-Gal) to UDP-glucose (UDP-Glc) through a mechanism involving the transient reduction of NAD. The polypeptide is UDP-glucose 4-epimerase (galE) (Neisseria meningitidis serogroup B (strain ATCC BAA-335 / MC58)).